We begin with the raw amino-acid sequence, 645 residues long: Threonine--tRNA ligase (645 aa).

Residues 1-63 (MEQINIQFPD…ETDGSIEIVT (63 aa)) form the TGS domain. The interval 242–540 (DHRKIGKELE…LTEETKGAFP (299 aa)) is catalytic. Zn(2+)-binding residues include C336, H387, and H517.

Belongs to the class-II aminoacyl-tRNA synthetase family. Homodimer. It depends on Zn(2+) as a cofactor.

It is found in the cytoplasm. The enzyme catalyses tRNA(Thr) + L-threonine + ATP = L-threonyl-tRNA(Thr) + AMP + diphosphate + H(+). Functionally, catalyzes the attachment of threonine to tRNA(Thr) in a two-step reaction: L-threonine is first activated by ATP to form Thr-AMP and then transferred to the acceptor end of tRNA(Thr). Also edits incorrectly charged L-seryl-tRNA(Thr). This chain is Threonine--tRNA ligase, found in Staphylococcus aureus (strain bovine RF122 / ET3-1).